Reading from the N-terminus, the 367-residue chain is tRNA N6-adenosine threonylcarbamoyltransferase (367 aa).

Residues H123 and H127 each coordinate Fe cation. Substrate-binding positions include 145–149 (LVSGG), D178, G191, and N288. Fe cation is bound at residue D316.

Belongs to the KAE1 / TsaD family. Fe(2+) is required as a cofactor.

The protein resides in the cytoplasm. It carries out the reaction L-threonylcarbamoyladenylate + adenosine(37) in tRNA = N(6)-L-threonylcarbamoyladenosine(37) in tRNA + AMP + H(+). Required for the formation of a threonylcarbamoyl group on adenosine at position 37 (t(6)A37) in tRNAs that read codons beginning with adenine. Is involved in the transfer of the threonylcarbamoyl moiety of threonylcarbamoyl-AMP (TC-AMP) to the N6 group of A37, together with TsaE and TsaB. TsaD likely plays a direct catalytic role in this reaction. The protein is tRNA N6-adenosine threonylcarbamoyltransferase of Caulobacter vibrioides (strain ATCC 19089 / CIP 103742 / CB 15) (Caulobacter crescentus).